A 199-amino-acid chain; its full sequence is Large ribosomal subunit protein eL13B (199 aa).

Phosphothreonine occurs at positions 144 and 152.

The protein belongs to the eukaryotic ribosomal protein eL13 family. As to quaternary structure, component of the large ribosomal subunit (LSU). Mature yeast ribosomes consist of a small (40S) and a large (60S) subunit. The 40S small subunit contains 1 molecule of ribosomal RNA (18S rRNA) and 33 different proteins (encoded by 57 genes). The large 60S subunit contains 3 rRNA molecules (25S, 5.8S and 5S rRNA) and 46 different proteins (encoded by 81 genes).

It is found in the cytoplasm. Its function is as follows. Component of the ribosome, a large ribonucleoprotein complex responsible for the synthesis of proteins in the cell. The small ribosomal subunit (SSU) binds messenger RNAs (mRNAs) and translates the encoded message by selecting cognate aminoacyl-transfer RNA (tRNA) molecules. The large subunit (LSU) contains the ribosomal catalytic site termed the peptidyl transferase center (PTC), which catalyzes the formation of peptide bonds, thereby polymerizing the amino acids delivered by tRNAs into a polypeptide chain. The nascent polypeptides leave the ribosome through a tunnel in the LSU and interact with protein factors that function in enzymatic processing, targeting, and the membrane insertion of nascent chains at the exit of the ribosomal tunnel. This Saccharomyces cerevisiae (strain ATCC 204508 / S288c) (Baker's yeast) protein is Large ribosomal subunit protein eL13B.